The chain runs to 177 residues: Large ribosomal subunit protein uL6 (177 aa).

The protein belongs to the universal ribosomal protein uL6 family. As to quaternary structure, part of the 50S ribosomal subunit.

In terms of biological role, this protein binds to the 23S rRNA, and is important in its secondary structure. It is located near the subunit interface in the base of the L7/L12 stalk, and near the tRNA binding site of the peptidyltransferase center. This chain is Large ribosomal subunit protein uL6, found in Pseudoalteromonas atlantica (strain T6c / ATCC BAA-1087).